Reading from the N-terminus, the 224-residue chain is MDKRIPVGADTLRIRNLGLQDYDTVWQAMRDFTVRRDSATVDELWWVEHPPVFTLGLNGQECHLRDVGDIPVVRCDRGGQVTYHGPGQSIVYILVDLRRRALGVRQLVDALELSVVDLLQSYEIETERRANAPGVYVQGRKIASLGLRVRKGCCYHGLSLNVAMDLSPFYRIDPCGYSGMEVIDLKRLGMELPLADVQQNLSRYLVRRLGYSAPFYGEENRMIK.

A BPL/LPL catalytic domain is found at 38–213 (SATVDELWWV…YLVRRLGYSA (176 aa)). Substrate is bound by residues 77-84 (RGGQVTYH), 144-146 (SLG), and 157-159 (GLS). C175 acts as the Acyl-thioester intermediate in catalysis.

It belongs to the LipB family.

The protein resides in the cytoplasm. The catalysed reaction is octanoyl-[ACP] + L-lysyl-[protein] = N(6)-octanoyl-L-lysyl-[protein] + holo-[ACP] + H(+). Its pathway is protein modification; protein lipoylation via endogenous pathway; protein N(6)-(lipoyl)lysine from octanoyl-[acyl-carrier-protein]: step 1/2. Functionally, catalyzes the transfer of endogenously produced octanoic acid from octanoyl-acyl-carrier-protein onto the lipoyl domains of lipoate-dependent enzymes. Lipoyl-ACP can also act as a substrate although octanoyl-ACP is likely to be the physiological substrate. This chain is Octanoyltransferase, found in Nitrosococcus oceani (strain ATCC 19707 / BCRC 17464 / JCM 30415 / NCIMB 11848 / C-107).